A 380-amino-acid polypeptide reads, in one-letter code: Adaptive-response sensory kinase SasA (380 aa).

The segment at 20-101 is kaiB-like domain, interacts with KaiC; sequence LLFVANRPGD…QKVDYWWPRW (82 aa). One can recognise a Histidine kinase domain in the interval 157–380; it reads LLAHELRNPL…CFHFTLPVYS (224 aa). At His160 the chain carries Phosphohistidine; by autocatalysis.

Homotrimer with a small amount of possible homohexamer; a protein fragment of 109-380 is also a homotrimer. Interacts with KaiC, probably as 1 SasA trimer:1 KaiC homohexamer; unphosphorylated SasA has the highest affinity. Homodimer. Binds to the B-loop in the CI domain of KaiC; SasA and KaiB(fs) compete to bind to the CI domain. Binds preferentially to doubly phosphorylated KaiC. Autophosphorylates, probably on His-160.

It carries out the reaction ATP + protein L-histidine = ADP + protein N-phospho-L-histidine.. In terms of biological role, member of the two-component regulatory system SasA/RpaA involved in genome-wide circadian gene expression. One of several clock output pathways. Participates in the Kai clock protein complex, the main circadian regulator in cyanobacteria, via its interaction with KaiC. KaiC enhances the autophosphorylation activity of SasA, which then transfers its phosphate group to RpaA to activate it. In addition to its output function, recruits fold-shifted KaiB (KaiB(fs)) to KaiC to cooperatively form the KaiB(6):KaiC(6) complex (independent of SasA kinase activity). Required for robustness of the circadian rhythm of gene expression and is involved in clock output, also required for adaptation to light/dark cycles. This Thermosynechococcus vestitus (strain NIES-2133 / IAM M-273 / BP-1) protein is Adaptive-response sensory kinase SasA.